Consider the following 441-residue polypeptide: DILAAFRVTPQPGVPPEEAGAAVAAESSTGTWTTVWTDGLTSLDRYKGRCYHIEPVPGEETQFIAYVAYPLDLFEEGSVTNMFTSIVGNVFGFKALRALRLEDLRIPVAYVKTFQGPPHGIQVERDKLNKYGRPLLGCTIKPKLGLSAKXYGRAVYECLRGGLDFTKDDENVNSQPFMRWRDRFLFCAEAIYKAQAETGEIKGHYLNATAGTCEDMMKRAVFARELGVPIVMHDYLTGGFTANTTLAHYCRDNGLLLHIHRAMHAVIDRQKNHGMHFRVLAKALRMSGGDHIHSGXVVGKLEGEREITLGFVDLLXXDFIEKVRSRGIXFTQDWVSLPGVLPVASGGIHVWHMPALTEIFGDDSVLQFGGGTLGHPWGNAPGAVRNRVALEACVQARNEGRDLAREGNEIIRXACKWSPELAAACEVWKEIKFEFEAMDTL.

Asn89 and Thr139 together coordinate substrate. The active-site Proton acceptor is the Lys141. Lys143 serves as a coordination point for substrate. Mg(2+)-binding residues include Lys167, Asp169, and Glu170. At Lys167 the chain carries N6-carboxylysine. The Proton acceptor role is filled by His260. Residues Arg261, His293, and Ser345 each coordinate substrate.

It belongs to the RuBisCO large chain family. Type I subfamily. In terms of assembly, heterohexadecamer of 8 large chains and 8 small chains; disulfide-linked. The disulfide link is formed within the large subunit homodimers. Requires Mg(2+) as cofactor. Post-translationally, the disulfide bond which can form in the large chain dimeric partners within the hexadecamer appears to be associated with oxidative stress and protein turnover.

The protein resides in the plastid. Its subcellular location is the chloroplast. It catalyses the reaction 2 (2R)-3-phosphoglycerate + 2 H(+) = D-ribulose 1,5-bisphosphate + CO2 + H2O. The catalysed reaction is D-ribulose 1,5-bisphosphate + O2 = 2-phosphoglycolate + (2R)-3-phosphoglycerate + 2 H(+). RuBisCO catalyzes two reactions: the carboxylation of D-ribulose 1,5-bisphosphate, the primary event in carbon dioxide fixation, as well as the oxidative fragmentation of the pentose substrate in the photorespiration process. Both reactions occur simultaneously and in competition at the same active site. The chain is Ribulose bisphosphate carboxylase large chain from Symphoricarpos albus (Common snowberry).